A 201-amino-acid chain; its full sequence is 3-isopropylmalate dehydratase small subunit (201 aa).

The protein belongs to the LeuD family. LeuD type 1 subfamily. Heterodimer of LeuC and LeuD.

The catalysed reaction is (2R,3S)-3-isopropylmalate = (2S)-2-isopropylmalate. It functions in the pathway amino-acid biosynthesis; L-leucine biosynthesis; L-leucine from 3-methyl-2-oxobutanoate: step 2/4. In terms of biological role, catalyzes the isomerization between 2-isopropylmalate and 3-isopropylmalate, via the formation of 2-isopropylmaleate. This Ruegeria pomeroyi (strain ATCC 700808 / DSM 15171 / DSS-3) (Silicibacter pomeroyi) protein is 3-isopropylmalate dehydratase small subunit.